A 111-amino-acid polypeptide reads, in one-letter code: Universal stress protein B (111 aa).

The next 2 membrane-spanning stretches (helical) occupy residues 1–21 and 90–110; these read MIST…NMAR and FILT…LMLW.

The protein belongs to the universal stress protein B family.

It is found in the cell inner membrane. This Yersinia pseudotuberculosis serotype O:1b (strain IP 31758) protein is Universal stress protein B.